The chain runs to 44 residues: Cuticle protein CP463 (44 aa).

2 consecutive repeat copies span residues 3–20 (LLEG…KKYL) and 27–44 (VLLS…NVQF).

In terms of tissue distribution, calcified shell.

This is Cuticle protein CP463 from Cancer pagurus (Rock crab).